Reading from the N-terminus, the 193-residue chain is Large ribosomal subunit protein eL19A (193 aa).

Residues 156-179 (QEQQDARRARAKAARQRRAKAVEE) form a disordered region. Basic residues predominate over residues 164-174 (ARAKAARQRRA).

It belongs to the eukaryotic ribosomal protein eL19 family. Component of the large ribosomal subunit (LSU). Mature yeast ribosomes consist of a small (40S) and a large (60S) subunit. The 40S small subunit contains 1 molecule of ribosomal RNA (18S rRNA) and at least 33 different proteins. The large 60S subunit contains 3 rRNA molecules (25S, 5.8S and 5S rRNA) and at least 46 different proteins. eL19 lies in close proximity to the binding site for eukaryotic initiation factor eIF4G.

The protein resides in the cytoplasm. Its function is as follows. Component of the ribosome, a large ribonucleoprotein complex responsible for the synthesis of proteins in the cell. The small ribosomal subunit (SSU) binds messenger RNAs (mRNAs) and translates the encoded message by selecting cognate aminoacyl-transfer RNA (tRNA) molecules. The large subunit (LSU) contains the ribosomal catalytic site termed the peptidyl transferase center (PTC), which catalyzes the formation of peptide bonds, thereby polymerizing the amino acids delivered by tRNAs into a polypeptide chain. The nascent polypeptides leave the ribosome through a tunnel in the LSU and interact with protein factors that function in enzymatic processing, targeting, and the membrane insertion of nascent chains at the exit of the ribosomal tunnel. eL19 may play a role in the last stages of translation initiation, in particular subunit joining and shedding/releasing factors. This chain is Large ribosomal subunit protein eL19A (rpl1901), found in Schizosaccharomyces pombe (strain 972 / ATCC 24843) (Fission yeast).